Here is a 308-residue protein sequence, read N- to C-terminus: Mitochondrial brown fat uncoupling protein 1 (308 aa).

The Mitochondrial intermembrane segment spans residues 1-10 (MVASAEADVP). Residues 11 to 33 (PPTMLVKIASAGLSACLADIITF) traverse the membrane as a helical segment. Solcar repeat units lie at residues 11–103 (PPTM…VQEY), 112–202 (ATLG…LKEA), and 211–296 (DDIP…LKKE). Over 34-74 (PLDTAKVRLQVQGERPNAPGVKYKGVLGTIATVAKTEGPLK) the chain is Mitochondrial matrix. K57 is a fatty acid 16:0 binding site. A helical transmembrane segment spans residues 75–97 (LYGGLPAGIQRQISFASLRIGLY). Topologically, residues 98-117 (DTVQEYFNAHRKTPATLGNK) are mitochondrial intermembrane. A helical transmembrane segment spans residues 118 to 134 (ISAGLMTGCVTVFIGQP). Over 135 to 179 (TEVAKVRMQAQSSLHWLKPRYSGTYNAYYVIVKTEGFLGLWKGTS) the chain is Mitochondrial matrix. The helical transmembrane segment at 180-196 (LNLTRNVIINCTELVVY) threads the bilayer. Residues 197-213 (DVLKEALVKNNVLADDI) are Mitochondrial intermembrane-facing. The chain crosses the membrane as a helical span at residues 214–233 (PCHLLAALTAGFCTTALASP). Over 234 to 267 (VDVVKTRFINSPPGYYPHVHNCALNMLQKEGLRA) the chain is Mitochondrial matrix. Residue C255 is modified to Cysteine sulfenic acid (-SOH). A helical transmembrane segment spans residues 268 to 290 (FFKGFVPSFLRLGSWTVIMHVTF). Position 270 (K270) interacts with fatty acid 16:0. Over 291–308 (EQLKKELMKSRQTVDCAT) the chain is Mitochondrial intermembrane.

This sequence belongs to the mitochondrial carrier (TC 2.A.29) family. As to quaternary structure, most probably functions as a monomer. Binds one purine nucleotide per monomer. However, has also been suggested to function as a homodimer or a homotetramer. Tightly associates with cardiolipin in the mitochondrion inner membrane; may stabilize and regulate its activity. May undergo sulfenylation upon cold exposure. May increase the sensitivity of UCP1 thermogenic function to the activation by noradrenaline probably through structural effects. In terms of processing, may undergo ubiquitin-mediated proteasomal degradation. As to expression, brown adipose tissue.

It localises to the mitochondrion inner membrane. The catalysed reaction is H(+)(in) = H(+)(out). With respect to regulation, has no constitutive proton transporter activity and has to be activated by long-chain fatty acids/LCFAs. Inhibited by purine nucleotides. Both purine nucleotides and LCFAs bind the cytosolic side of the transporter and directly compete to activate or inhibit it. Activated by noradrenaline and reactive oxygen species. Despite lacking canonical translational encoding for selenocysteine, a small pool of the protein has been observed to selectively incorporate selenocysteine at 'Cys-255'. Selenocysteine-modified protein is highly sensitive to redox modification and may constitute a pool of protein highly sensitive to activation by elevated levels of reactive oxygen species (ROS). In terms of biological role, mitochondrial protein responsible for thermogenic respiration, a specialized capacity of brown adipose tissue and beige fat that participates in non-shivering adaptive thermogenesis to temperature and diet variations and more generally to the regulation of energy balance. Functions as a long-chain fatty acid/LCFA and proton symporter, simultaneously transporting one LCFA and one proton through the inner mitochondrial membrane. However, LCFAs remaining associated with the transporter via their hydrophobic tails, it results in an apparent transport of protons activated by LCFAs. Thereby, dissipates the mitochondrial proton gradient and converts the energy of substrate oxydation into heat instead of ATP. Regulates the production of reactive oxygen species/ROS by mitochondria. This chain is Mitochondrial brown fat uncoupling protein 1, found in Suncus murinus (Asian house shrew).